Here is a 197-residue protein sequence, read N- to C-terminus: 3-isopropylmalate dehydratase small subunit (197 aa).

This sequence belongs to the LeuD family. LeuD type 1 subfamily. Heterodimer of LeuC and LeuD.

The catalysed reaction is (2R,3S)-3-isopropylmalate = (2S)-2-isopropylmalate. The protein operates within amino-acid biosynthesis; L-leucine biosynthesis; L-leucine from 3-methyl-2-oxobutanoate: step 2/4. In terms of biological role, catalyzes the isomerization between 2-isopropylmalate and 3-isopropylmalate, via the formation of 2-isopropylmaleate. This Geobacillus kaustophilus (strain HTA426) protein is 3-isopropylmalate dehydratase small subunit.